The primary structure comprises 812 residues: Eukaryotic translation initiation factor 3 subunit C (812 aa).

Residues Met-1–Lys-105 form a disordered region. Composition is skewed to acidic residues over residues Ser-17–Ser-40 and Ser-48–Ser-59. In terms of domain architecture, PCI spans Phe-607–Glu-783.

Belongs to the eIF-3 subunit C family. Component of the eukaryotic translation initiation factor 3 (eIF-3) complex.

It is found in the cytoplasm. Component of the eukaryotic translation initiation factor 3 (eIF-3) complex, which is involved in protein synthesis of a specialized repertoire of mRNAs and, together with other initiation factors, stimulates binding of mRNA and methionyl-tRNAi to the 40S ribosome. The eIF-3 complex specifically targets and initiates translation of a subset of mRNAs involved in cell proliferation. This chain is Eukaryotic translation initiation factor 3 subunit C, found in Eremothecium gossypii (strain ATCC 10895 / CBS 109.51 / FGSC 9923 / NRRL Y-1056) (Yeast).